The primary structure comprises 122 residues: Large ribosomal subunit protein uL14 (122 aa).

The protein belongs to the universal ribosomal protein uL14 family. As to quaternary structure, part of the 50S ribosomal subunit. Forms a cluster with proteins L3 and L19. In the 70S ribosome, L14 and L19 interact and together make contacts with the 16S rRNA in bridges B5 and B8.

Binds to 23S rRNA. Forms part of two intersubunit bridges in the 70S ribosome. This Herpetosiphon aurantiacus (strain ATCC 23779 / DSM 785 / 114-95) protein is Large ribosomal subunit protein uL14.